The following is a 325-amino-acid chain: Glutarate 2-hydroxylase (325 aa).

Residues His160, Asp162, and His292 each contribute to the Fe cation site.

This sequence belongs to the glutarate hydroxylase family. As to quaternary structure, homotetramer. It depends on Fe(2+) as a cofactor.

It carries out the reaction glutarate + 2-oxoglutarate + O2 = (S)-2-hydroxyglutarate + succinate + CO2. The protein operates within amino-acid degradation. Acts as an alpha-ketoglutarate-dependent dioxygenase catalyzing hydroxylation of glutarate (GA) to L-2-hydroxyglutarate (L2HG). Functions in a L-lysine degradation pathway that proceeds via cadaverine, glutarate and L-2-hydroxyglutarate. This is Glutarate 2-hydroxylase from Klebsiella pneumoniae (strain 342).